The chain runs to 561 residues: Zinc finger protein with KRAB and SCAN domains 1 (561 aa).

A disordered region spans residues 1–51 (MMTAESRETTGLSPQAAQEKDGIVIVKVEEEDEEDHMWGQDSSLQETPPPD). Phosphoserine is present on Ser-13. A Glycyl lysine isopeptide (Lys-Gly) (interchain with G-Cter in SUMO2) cross-link involves residue Lys-27. The region spanning 56–138 (RQRFRRFCYQ…TLLEDLELDL (83 aa)) is the SCAN box domain. The tract at residues 163–187 (VQESSSFDHHETAQSHFKHSSRKPR) is disordered. Residues 178–187 (HFKHSSRKPR) are compositionally biased toward basic residues. Residues Lys-180 and Lys-226 each participate in a glycyl lysine isopeptide (Lys-Gly) (interchain with G-Cter in SUMO2) cross-link. A KRAB domain is found at 225 to 304 (VKIEDMAVSL…QKEFGEKREQ (80 aa)). Polar residues predominate over residues 260–275 (NVFSQGSENRNGNEST). The disordered stretch occupies residues 260–372 (NVFSQGSENR…NTPEEAPSGA (113 aa)). Composition is skewed to basic and acidic residues over residues 276–286 (SKAEVKEDSTS) and 294–349 (FQKE…EKGK). Glycyl lysine isopeptide (Lys-Gly) (interchain with G-Cter in SUMO2) cross-links involve residues Lys-277, Lys-296, Lys-301, and Lys-336. Over residues 355–365 (FSLSANFNNTP) the composition is skewed to polar residues. Residue Lys-373 forms a Glycyl lysine isopeptide (Lys-Gly) (interchain with G-Cter in SUMO2) linkage. C2H2-type zinc fingers lie at residues 375–397 (HRCDECGKCFTRSSSLIRHKIIH), 403–425 (YECNECGKAFSLNSNLVLHQRIH), 431–453 (HECNECGKAFSHSSNLILHQRIH), 459–481 (YECNECGKAFSQSSDLTKHQRIH), 487–509 (YECSECGKAFNRNSYLILHRRIH), and 515–537 (YKCTKCGKAFTRSSTLTLHHRIH). Residues Lys-410, Lys-438, and Lys-476 each participate in a glycyl lysine isopeptide (Lys-Gly) (interchain with G-Cter in SUMO2) cross-link. Lys-558 is covalently cross-linked (Glycyl lysine isopeptide (Lys-Gly) (interchain with G-Cter in SUMO2)).

The protein belongs to the krueppel C2H2-type zinc-finger protein family.

It is found in the nucleus. May be involved in transcriptional regulation. This chain is Zinc finger protein with KRAB and SCAN domains 1 (Zkscan1), found in Mus musculus (Mouse).